Reading from the N-terminus, the 342-residue chain is Sorting nexin-15 (342 aa).

The PX domain occupies 1–130; the sequence is MSRQAKDDFL…EFFRGGEVTR (130 aa). Arg51, Ser53, Arg87, and Arg96 together coordinate a 1,2-diacyl-sn-glycero-3-phospho-(1D-myo-inositol-3-phosphate). An Omega-N-methylarginine modification is found at Arg105. 2 positions are modified to phosphoserine: Ser201 and Ser227. The segment at 245-267 is disordered; it reads DQEPWEPGGQEEEEDGEGGPTPA. One can recognise an MIT domain in the interval 265–342; that stretch reads TPAYLSQATE…LRLHLSQLPP (78 aa).

This sequence belongs to the sorting nexin family. Homodimer. Interacts with SNX1, SNX2 and SNX4. In terms of tissue distribution, widely expressed.

It localises to the cytoplasm. Its subcellular location is the membrane. The protein resides in the cytoplasmic vesicle membrane. May be involved in several stages of intracellular trafficking. Overexpression of SNX15 disrupts the normal trafficking of proteins from the plasma membrane to recycling endosomes or the TGN. The chain is Sorting nexin-15 (SNX15) from Homo sapiens (Human).